We begin with the raw amino-acid sequence, 448 residues long: MSNESFPETLENLLSTLQTKQQNAIQSEVIKWLHSFCETFHLKIHCHKQFIPSGEKKWPKIPTQETQENTQPPHHVHRVVLSRAQPLKVQESLLTTMCNGLVLDANTWTCLAVPPPAPFQQVTRQVQHYYRNKFYEVAAIQDGTLLTIYYWDDPEHGPSWCLASTHGYDVSNYCWIGDKTFAELVYELLQQHSTCNVTLEKNKTRGTRLFFNELNRDYCYTIGIRHHNLQPLIHDPQNIWAIQSTNLKTLKTVYPEYYGYVGIPGIQSQVPELPQFELPYLIRSYRTAMNQAKNAIKNGKKEKEYFNYGYLLISRAPAITKSISIVLLKSPLLVFLQKSVYQKKYNISSSLRLEFIILQNYLMQHFRDNFIALFPQYISYYMKYQNMLNMIIHSIAIKDKDHPFAGAVVKKVLEDIENAENIIDHTTIQNYAYQSKYAMLYLSIITHF.

The protein belongs to the asfivirus M448R family.

The protein localises to the virion. The sequence is that of Putative RNA-ligase from African swine fever virus (isolate Pig/Kenya/KEN-50/1950) (ASFV).